A 704-amino-acid polypeptide reads, in one-letter code: MRFWTSAAAAEILRRDEHVVRKLLNPRVYSKLVNAFSETETKLRSLCEDSNPQLKNAVSVFQQAVDSGSSLAFAGNNLMAKLVRSRNHELAFSFYRKMLETDTFINFVSLSGLLECYVQMRKTGFAFGVLALMLKRGFAFNVYNHNILLKGLCRNLECGKAVSLLREMRRNSLMPDVFSYNTVIRGFCEGKELEKALELANEMKGSGCSWSLVTWGILIDAFCKAGKMDEAMGFLKEMKFMGLEADLVVYTSLIRGFCDCGELDRGKALFDEVLERGDSPCAITYNTLIRGFCKLGQLKEASEIFEFMIERGVRPNVYTYTGLIDGLCGVGKTKEALQLLNLMIEKDEEPNAVTYNIIINKLCKDGLVADAVEIVELMKKRRTRPDNITYNILLGGLCAKGDLDEASKLLYLMLKDSSYTDPDVISYNALIHGLCKENRLHQALDIYDLLVEKLGAGDRVTTNILLNSTLKAGDVNKAMELWKQISDSKIVRNSDTYTAMIDGFCKTGMLNVAKGLLCKMRVSELQPSVFDYNCLLSSLCKEGSLDQAWRLFEEMQRDNNFPDVVSFNIMIDGSLKAGDIKSAESLLVGMSRAGLSPDLFTYSKLINRFLKLGYLDEAISFFDKMVDSGFEPDAHICDSVLKYCISQGETDKLTELVKKLVDKDIVLDKELTCTVMDYMCNSSANMDLAKRLLRVTDDKEERDK.

PPR repeat units lie at residues leucine 71 to isoleucine 105, asparagine 106 to phenylalanine 140, asparagine 141 to proline 175, aspartate 176 to tryptophan 210, serine 211 to alanine 245, aspartate 246 to proline 280, cysteine 281 to proline 315, asparagine 316 to proline 350, asparagine 351 to proline 385, aspartate 386 to aspartate 416, aspartate 423 to lysine 453, aspartate 458 to arginine 492, asparagine 493 to proline 527, serine 528 to proline 562, aspartate 563 to proline 597, aspartate 598 to proline 632, and aspartate 633 to leucine 667.

This sequence belongs to the PPR family. P subfamily.

The protein is Pentatricopeptide repeat-containing protein At4g28010 of Arabidopsis thaliana (Mouse-ear cress).